The following is a 461-amino-acid chain: NADP-specific glutamate dehydrogenase (461 aa).

K115 is a catalytic residue.

The protein belongs to the Glu/Leu/Phe/Val dehydrogenases family. Homohexamer.

It carries out the reaction L-glutamate + NADP(+) + H2O = 2-oxoglutarate + NH4(+) + NADPH + H(+). This Penicillium chrysogenum (Penicillium notatum) protein is NADP-specific glutamate dehydrogenase (GDH).